The following is an 85-amino-acid chain: DNA-directed RNA polymerase subunit omega (85 aa).

This sequence belongs to the RNA polymerase subunit omega family. As to quaternary structure, the RNAP catalytic core consists of 2 alpha, 1 beta, 1 beta' and 1 omega subunit. When a sigma factor is associated with the core the holoenzyme is formed, which can initiate transcription.

It catalyses the reaction RNA(n) + a ribonucleoside 5'-triphosphate = RNA(n+1) + diphosphate. Its function is as follows. Promotes RNA polymerase assembly. Latches the N- and C-terminal regions of the beta' subunit thereby facilitating its interaction with the beta and alpha subunits. In Latilactobacillus sakei subsp. sakei (strain 23K) (Lactobacillus sakei subsp. sakei), this protein is DNA-directed RNA polymerase subunit omega.